Consider the following 336-residue polypeptide: uncharacterized protein (336 aa).

The segment at A162–D195 is disordered. A compositionally biased stretch (low complexity) spans S169 to T187.

It belongs to the AHA1 family.

This is an uncharacterized protein from Schizosaccharomyces pombe (strain 972 / ATCC 24843) (Fission yeast).